Here is a 214-residue protein sequence, read N- to C-terminus: Large ribosomal subunit protein uL3 (214 aa).

The tract at residues 131–155 (GAQRTSHGNSRSHRVPGSIGMAQDP) is disordered. At Gln-153 the chain carries N5-methylglutamine.

It belongs to the universal ribosomal protein uL3 family. Part of the 50S ribosomal subunit. Forms a cluster with proteins L14 and L19. Post-translationally, methylated by PrmB.

Functionally, one of the primary rRNA binding proteins, it binds directly near the 3'-end of the 23S rRNA, where it nucleates assembly of the 50S subunit. The sequence is that of Large ribosomal subunit protein uL3 from Neisseria gonorrhoeae (strain ATCC 700825 / FA 1090).